Consider the following 258-residue polypeptide: Acyl-[acyl-carrier-protein]--UDP-N-acetylglucosamine O-acyltransferase (258 aa).

This sequence belongs to the transferase hexapeptide repeat family. LpxA subfamily. Homotrimer.

The protein localises to the cytoplasm. It carries out the reaction a (3R)-hydroxyacyl-[ACP] + UDP-N-acetyl-alpha-D-glucosamine = a UDP-3-O-[(3R)-3-hydroxyacyl]-N-acetyl-alpha-D-glucosamine + holo-[ACP]. It participates in glycolipid biosynthesis; lipid IV(A) biosynthesis; lipid IV(A) from (3R)-3-hydroxytetradecanoyl-[acyl-carrier-protein] and UDP-N-acetyl-alpha-D-glucosamine: step 1/6. Its function is as follows. Involved in the biosynthesis of lipid A, a phosphorylated glycolipid that anchors the lipopolysaccharide to the outer membrane of the cell. This is Acyl-[acyl-carrier-protein]--UDP-N-acetylglucosamine O-acyltransferase from Myxococcus xanthus (strain DK1622).